A 351-amino-acid chain; its full sequence is Ferredoxin--NADP reductase (351 aa).

Positions 44, 52, 57, 97, 132, 296, and 337 each coordinate FAD.

This sequence belongs to the ferredoxin--NADP reductase type 2 family. As to quaternary structure, homodimer. Requires FAD as cofactor.

It carries out the reaction 2 reduced [2Fe-2S]-[ferredoxin] + NADP(+) + H(+) = 2 oxidized [2Fe-2S]-[ferredoxin] + NADPH. This Paraburkholderia phymatum (strain DSM 17167 / CIP 108236 / LMG 21445 / STM815) (Burkholderia phymatum) protein is Ferredoxin--NADP reductase.